Here is a 402-residue protein sequence, read N- to C-terminus: UDP-glucose 6-dehydrogenase (402 aa).

NAD(+) is bound by residues Lys-2–Leu-19, Val-11, Asp-29, Lys-34, Thr-83, Thr-118, and Glu-145. Substrate contacts are provided by residues Glu-141–Glu-145, Lys-204, Asn-208, Tyr-249–Ser-253, and Gly-257. Residue Tyr-259 coordinates NAD(+). Cys-260 serves as the catalytic Nucleophile. NAD(+) is bound at residue Lys-263. Lys-320 serves as a coordination point for substrate. Residue Arg-327 participates in NAD(+) binding.

Belongs to the UDP-glucose/GDP-mannose dehydrogenase family.

It catalyses the reaction UDP-alpha-D-glucose + 2 NAD(+) + H2O = UDP-alpha-D-glucuronate + 2 NADH + 3 H(+). Its pathway is nucleotide-sugar biosynthesis; UDP-alpha-D-glucuronate biosynthesis; UDP-alpha-D-glucuronate from UDP-alpha-D-glucose: step 1/1. Catalyzes the formation of UDP-glucuronic acid which is required for capsular hyaluronic acid synthesis. In Streptococcus pyogenes serotype M1, this protein is UDP-glucose 6-dehydrogenase (hasB).